Here is a 249-residue protein sequence, read N- to C-terminus: Basic leucine zipper 23 (249 aa).

Positions 66-90 are disordered; sequence KVSTDDTSESSGKKRPLGNREAVRK. The region spanning 74-121 is the bZIP domain; that stretch reads ESSGKKRPLGNREAVRKYREKKKAKAASLEDEVMRLKAVNNQLLKRLQ. The tract at residues 78-98 is basic motif; it reads KKRPLGNREAVRKYREKKKAK. Residues 102–116 are leucine-zipper; the sequence is LEDEVMRLKAVNNQL.

The protein localises to the nucleus. Its function is as follows. Transcription factor involved in the response to zinc ion deficiency. Binds to the consensus sequence 5'-[AG]TGTCGACA[CT]-3' also called zinc deficiency response element (ZDRE). The ZDRE sequence is conserved in the plant kingdom and present in the promoters of genes that constitute the primary response to zinc deficiency, comprising additional ZIP metal transporter genes. Required for zinc accumulation in roots. Mediates the expression of the zinc transporter ZIP12 during growth in zinc-deficient conditions. ZIP12 transporter is involved in zinc uptake in roots. In Arabidopsis thaliana (Mouse-ear cress), this protein is Basic leucine zipper 23.